We begin with the raw amino-acid sequence, 404 residues long: Cysteine desulfurase IscS (404 aa).

Pyridoxal 5'-phosphate contacts are provided by residues 75 to 76 (AT), Asn-155, Gln-183, and 203 to 205 (SAH). The residue at position 206 (Lys-206) is an N6-(pyridoxal phosphate)lysine. A pyridoxal 5'-phosphate-binding site is contributed by Thr-243. Cys-328 serves as the catalytic Cysteine persulfide intermediate. Residue Cys-328 coordinates [2Fe-2S] cluster.

This sequence belongs to the class-V pyridoxal-phosphate-dependent aminotransferase family. NifS/IscS subfamily. Homodimer. Forms a heterotetramer with IscU, interacts with other sulfur acceptors. Pyridoxal 5'-phosphate serves as cofactor.

The protein resides in the cytoplasm. It carries out the reaction (sulfur carrier)-H + L-cysteine = (sulfur carrier)-SH + L-alanine. The protein operates within cofactor biosynthesis; iron-sulfur cluster biosynthesis. In terms of biological role, master enzyme that delivers sulfur to a number of partners involved in Fe-S cluster assembly, tRNA modification or cofactor biosynthesis. Catalyzes the removal of elemental sulfur atoms from cysteine to produce alanine. Functions as a sulfur delivery protein for Fe-S cluster synthesis onto IscU, an Fe-S scaffold assembly protein, as well as other S acceptor proteins. In Ectopseudomonas mendocina (strain ymp) (Pseudomonas mendocina), this protein is Cysteine desulfurase IscS.